Here is a 509-residue protein sequence, read N- to C-terminus: 2,3-bisphosphoglycerate-independent phosphoglycerate mutase (509 aa).

The Mn(2+) site is built by D14 and S64. Catalysis depends on S64, which acts as the Phosphoserine intermediate. Substrate-binding positions include H125, 155–156 (RD), R187, R193, 259–262 (RADR), and K332. The Mn(2+) site is built by D399, H403, D440, H441, and H459.

Belongs to the BPG-independent phosphoglycerate mutase family. Monomer. Mn(2+) serves as cofactor.

The catalysed reaction is (2R)-2-phosphoglycerate = (2R)-3-phosphoglycerate. It functions in the pathway carbohydrate degradation; glycolysis; pyruvate from D-glyceraldehyde 3-phosphate: step 3/5. Its function is as follows. Catalyzes the interconversion of 2-phosphoglycerate and 3-phosphoglycerate. The polypeptide is 2,3-bisphosphoglycerate-independent phosphoglycerate mutase (Psychromonas ingrahamii (strain DSM 17664 / CCUG 51855 / 37)).